The following is a 122-amino-acid chain: Putative syntaxin 6 (122 aa).

The Cytoplasmic portion of the chain corresponds to methionine 1 to serine 100. In terms of domain architecture, t-SNARE coiled-coil homology spans glutamate 31 to leucine 93. A helical; Anchor for type IV membrane protein transmembrane segment spans residues serine 101–leucine 121. A topological domain (extracellular) is located at residue valine 122.

It belongs to the syntaxin family.

Its subcellular location is the membrane. In terms of biological role, SNARE promoting movement of transport vesicles to target membranes. Potentially functions in retrograde trafficking and in the endocytic recycling pathway. The polypeptide is Putative syntaxin 6 (syx-6) (Caenorhabditis elegans).